We begin with the raw amino-acid sequence, 104 residues long: Circadian clock oscillator protein KaiB (104 aa).

It belongs to the KaiB family. In terms of assembly, the KaiABC complex composition changes during the circadian cycle to control KaiC phosphorylation. Complexes KaiC(6), KaiA(2-4):KaiC(6), KaiB(6):KaiC(6) and KaiC(6):KaiB(6):KaiA(12) are among the most important forms, many form cooperatively. Undergoes a major conformational rearrangment; in the free state forms homotetramers as a dimer of dimers. When bound to the CI domain of KaiC switches to a monomeric thioredoxin-fold (KaiB(fs)). KaiB(fs) binds CikA, leading it to dephosphorylate phospho-RpaA.

In terms of biological role, key component of the KaiABC oscillator complex, which constitutes the main circadian regulator in cyanobacteria. Complex composition changes during the circadian cycle to control KaiC phosphorylation. KaiA stimulates KaiC autophosphorylation, while KaiB sequesters KaiA, leading to KaiC autodephosphorylation. Phospho-Ser-431 KaiC accumulation triggers binding of KaiB to form the KaiB(6):KaiC(6) complex, leading to changes in output regulators CikA and SasA. KaiB switches to a thioredoxin-like fold (KaiB(fs)) when bound to KaiC. KaiB(6):KaiC(6) formation exposes a site for KaiA binding that sequesters KaiA from KaiC, making the KaiC(6):KaiB(6):KaiA(12) complex that results in KaiC autodephosphorylation. Functionally, a metamorphic protein which reversibly switches between an inactive tetrameric fold and a rare, thioredoxin-like monomeric fold (KaiB(fs)). KaiB(fs) binds phospho-KaiC, KaiA and CikA. KaiA and CikA compete for binding to KaiB(fs), and KaiB(fs) and SasA compete for binding to KaiC, thus the clock oscillator and output signal pathway are tightly coupled. This chain is Circadian clock oscillator protein KaiB, found in Rippkaea orientalis (strain PCC 8801 / RF-1) (Cyanothece sp. (strain PCC 8801)).